Here is a 462-residue protein sequence, read N- to C-terminus: Glycine--tRNA ligase (462 aa).

Substrate is bound by residues Arg94 and Glu143. ATP-binding positions include 175–177, 185–190, 259–260, and 308–311; these read RNE, FRTCEF, EL, and GLTR. 190–194 lines the substrate pocket; it reads FEQME. 304 to 308 contacts substrate; that stretch reads ETSAG.

The protein belongs to the class-II aminoacyl-tRNA synthetase family. As to quaternary structure, homodimer.

Its subcellular location is the cytoplasm. It catalyses the reaction tRNA(Gly) + glycine + ATP = glycyl-tRNA(Gly) + AMP + diphosphate. Its function is as follows. Catalyzes the attachment of glycine to tRNA(Gly). This is Glycine--tRNA ligase from Treponema pallidum (strain Nichols).